Here is a 559-residue protein sequence, read N- to C-terminus: 2-succinyl-5-enolpyruvyl-6-hydroxy-3-cyclohexene-1-carboxylate synthase (559 aa).

Belongs to the TPP enzyme family. MenD subfamily. In terms of assembly, homodimer. The cofactor is Mg(2+). Mn(2+) serves as cofactor. Requires thiamine diphosphate as cofactor.

The catalysed reaction is isochorismate + 2-oxoglutarate + H(+) = 5-enolpyruvoyl-6-hydroxy-2-succinyl-cyclohex-3-ene-1-carboxylate + CO2. The protein operates within quinol/quinone metabolism; 1,4-dihydroxy-2-naphthoate biosynthesis; 1,4-dihydroxy-2-naphthoate from chorismate: step 2/7. It functions in the pathway quinol/quinone metabolism; menaquinone biosynthesis. In terms of biological role, catalyzes the thiamine diphosphate-dependent decarboxylation of 2-oxoglutarate and the subsequent addition of the resulting succinic semialdehyde-thiamine pyrophosphate anion to isochorismate to yield 2-succinyl-5-enolpyruvyl-6-hydroxy-3-cyclohexene-1-carboxylate (SEPHCHC). The chain is 2-succinyl-5-enolpyruvyl-6-hydroxy-3-cyclohexene-1-carboxylate synthase from Cytophaga hutchinsonii (strain ATCC 33406 / DSM 1761 / CIP 103989 / NBRC 15051 / NCIMB 9469 / D465).